Consider the following 222-residue polypeptide: Interleukin-12 subunit alpha (222 aa).

An N-terminal signal peptide occupies residues 1-25 (MCPLRSLFLMATLVFLNHLDHLSLA). Disulfide bonds link cysteine 40-cysteine 113, cysteine 67-cysteine 199, and cysteine 88-cysteine 126. Asparagine 96 and asparagine 174 each carry an N-linked (GlcNAc...) asparagine glycan.

This sequence belongs to the IL-6 superfamily. As to quaternary structure, heterodimer with IL12B; disulfide-linked. This heterodimer is known as interleukin IL-12. Heterodimer with EBI3/IL27B; not disulfide-linked. This heterodimer is known as interleukin IL-35. Interacts with NBR1; this interaction promotes IL-12 secretion.

The protein resides in the secreted. Heterodimerizes with IL12B to form the IL-12 cytokine or with EBI3/IL27B to form the IL-35 cytokine. IL-12 is primarily produced by professional antigen-presenting cells (APCs) such as B-cells and dendritic cells (DCs) as well as macrophages and granulocytes and regulates T-cell and natural killer-cell responses, induces the production of interferon-gamma (IFN-gamma), favors the differentiation of T-helper 1 (Th1) cells and is an important link between innate resistance and adaptive immunity. Mechanistically, exerts its biological effects through a receptor composed of IL12R1 and IL12R2 subunits. Binding to the receptor results in the rapid tyrosine phosphorylation of a number of cellular substrates including the JAK family kinases TYK2 and JAK2. In turn, recruited STAT4 gets phosphorylated and translocates to the nucleus where it regulates cytokine/growth factor responsive genes. As part of IL-35, plays essential roles in maintaining the immune homeostasis of the liver microenvironment and also functions as an immune-suppressive cytokine. Mediates biological events through unconventional receptors composed of IL12RB2 and gp130/IL6ST heterodimers or homodimers. Signaling requires the transcription factors STAT1 and STAT4, which form a unique heterodimer that binds to distinct DNA sites. This chain is Interleukin-12 subunit alpha (IL12A), found in Lama glama (Llama).